Reading from the N-terminus, the 131-residue chain is Sperm microtubule inner protein 11 (131 aa).

Residues 18-44 are disordered; the sequence is KKRNTTEETNQKEPEPTRLPPIISKDG. Residues 21–33 are compositionally biased toward basic and acidic residues; that stretch reads NTTEETNQKEPEP.

As to quaternary structure, microtubule inner protein component of sperm flagellar doublet microtubules.

Its subcellular location is the cytoplasm. It is found in the cytoskeleton. The protein resides in the flagellum axoneme. Its function is as follows. Microtubule inner protein (MIP) part of the dynein-decorated doublet microtubules (DMTs) in flagellum axoneme. May serve to reinforce and thus stabilize the microtubule structure in the sperm flagella. The protein is Sperm microtubule inner protein 11 of Homo sapiens (Human).